The primary structure comprises 72 residues: 3-deoxy-manno-octulosonate cytidylyltransferase (72 aa).

Belongs to the KdsB family. As to quaternary structure, homodimer.

It localises to the cytoplasm. It catalyses the reaction 3-deoxy-alpha-D-manno-oct-2-ulosonate + CTP = CMP-3-deoxy-beta-D-manno-octulosonate + diphosphate. Its pathway is nucleotide-sugar biosynthesis; CMP-3-deoxy-D-manno-octulosonate biosynthesis; CMP-3-deoxy-D-manno-octulosonate from 3-deoxy-D-manno-octulosonate and CTP: step 1/1. It functions in the pathway bacterial outer membrane biogenesis; lipopolysaccharide biosynthesis. Activates KDO (a required 8-carbon sugar) for incorporation into bacterial lipopolysaccharide in Gram-negative bacteria. The protein is 3-deoxy-manno-octulosonate cytidylyltransferase (kpsU) of Escherichia coli.